An 814-amino-acid chain; its full sequence is Putative serine/threonine-protein kinase-like protein CCR3 (814 aa).

The first 30 residues, Met-1–Ser-30, serve as a signal peptide directing secretion. Residues Asn-6, Asn-68, Asn-136, Asn-215, Asn-226, Asn-251, Asn-260, Asn-275, Asn-299, and Asn-309 are each glycosylated (N-linked (GlcNAc...) asparagine). Residues Leu-31–Arg-393 lie on the Extracellular side of the membrane. Pro residues predominate over residues Ser-366–Pro-381. The segment at Ser-366–Ser-388 is disordered. The helical transmembrane segment at Gly-394–Val-414 threads the bilayer. Topologically, residues Tyr-415–Asp-814 are cytoplasmic. The tract at residues Gln-433 to Ala-478 is disordered. The span at Ser-441 to Arg-457 shows a compositional bias: low complexity. One can recognise a Protein kinase domain in the interval Phe-496–Leu-794. Residues Ile-502–Val-510 and Lys-524 contribute to the ATP site. Asp-631 acts as the Proton acceptor in catalysis.

The protein belongs to the protein kinase superfamily. Ser/Thr protein kinase family. In terms of assembly, homodimer. As to expression, expressed in roots, leaves, shoot apical meristems (SAM), and floral buds.

The protein localises to the membrane. It carries out the reaction L-seryl-[protein] + ATP = O-phospho-L-seryl-[protein] + ADP + H(+). The catalysed reaction is L-threonyl-[protein] + ATP = O-phospho-L-threonyl-[protein] + ADP + H(+). Functionally, serine/threonine-protein kinase. The polypeptide is Putative serine/threonine-protein kinase-like protein CCR3 (CCR3) (Arabidopsis thaliana (Mouse-ear cress)).